A 375-amino-acid chain; its full sequence is Putative disease resistance protein At3g15700 (375 aa).

A coiled-coil region spans residues 17-49 (KENDNVKKLKTATEELKDLRNIVMKRVKMYEDQ). The NB-ARC domain occupies 158 to 372 (DNTGIIGLYG…LSTSPPNFSG (215 aa)). An ATP-binding site is contributed by 167–174 (GVEGVGKT).

Its function is as follows. Potential disease resistance protein. The chain is Putative disease resistance protein At3g15700 from Arabidopsis thaliana (Mouse-ear cress).